Consider the following 108-residue polypeptide: Large ribosomal subunit protein uL24 (108 aa).

Belongs to the universal ribosomal protein uL24 family. Part of the 50S ribosomal subunit.

Its function is as follows. One of two assembly initiator proteins, it binds directly to the 5'-end of the 23S rRNA, where it nucleates assembly of the 50S subunit. One of the proteins that surrounds the polypeptide exit tunnel on the outside of the subunit. This is Large ribosomal subunit protein uL24 from Citrifermentans bemidjiense (strain ATCC BAA-1014 / DSM 16622 / JCM 12645 / Bem) (Geobacter bemidjiensis).